Here is a 488-residue protein sequence, read N- to C-terminus: 3-octaprenyl-4-hydroxybenzoate carboxy-lyase (488 aa).

Position 172 (asparagine 172) interacts with Mn(2+). Prenylated FMN contacts are provided by residues 175-177 (IYR), 189-191 (RWL), and 194-195 (RG). Residue glutamate 238 coordinates Mn(2+). The Proton donor role is filled by aspartate 287.

Belongs to the UbiD family. In terms of assembly, homohexamer. It depends on prenylated FMN as a cofactor. Requires Mn(2+) as cofactor.

The protein localises to the cell membrane. The enzyme catalyses a 4-hydroxy-3-(all-trans-polyprenyl)benzoate + H(+) = a 2-(all-trans-polyprenyl)phenol + CO2. It functions in the pathway cofactor biosynthesis; ubiquinone biosynthesis. Catalyzes the decarboxylation of 3-octaprenyl-4-hydroxy benzoate to 2-octaprenylphenol, an intermediate step in ubiquinone biosynthesis. This chain is 3-octaprenyl-4-hydroxybenzoate carboxy-lyase, found in Pseudomonas syringae pv. tomato (strain ATCC BAA-871 / DC3000).